A 241-amino-acid chain; its full sequence is Small ribosomal subunit protein uS3 (241 aa).

The region spanning 39–109 (VRNYVNKNLS…PIRINVVEVA (71 aa)) is the KH type-2 domain. Positions 213 to 241 (ADEQPTNREPQQRRRQQQRRRQQFEDRSE) are disordered.

The protein belongs to the universal ribosomal protein uS3 family. As to quaternary structure, part of the 30S ribosomal subunit. Forms a tight complex with proteins S10 and S14.

Functionally, binds the lower part of the 30S subunit head. Binds mRNA in the 70S ribosome, positioning it for translation. In Acaryochloris marina (strain MBIC 11017), this protein is Small ribosomal subunit protein uS3.